Here is a 153-residue protein sequence, read N- to C-terminus: 6,7-dimethyl-8-ribityllumazine synthase (153 aa).

Residues phenylalanine 21, 55–57 (AFE), and 79–81 (CVI) contribute to the 5-amino-6-(D-ribitylamino)uracil site. 84-85 (AT) is a (2S)-2-hydroxy-3-oxobutyl phosphate binding site. Residue histidine 87 is the Proton donor of the active site. Phenylalanine 112 provides a ligand contact to 5-amino-6-(D-ribitylamino)uracil. Arginine 126 serves as a coordination point for (2S)-2-hydroxy-3-oxobutyl phosphate.

Belongs to the DMRL synthase family. As to quaternary structure, forms an icosahedral capsid composed of 60 subunits, arranged as a dodecamer of pentamers.

The catalysed reaction is (2S)-2-hydroxy-3-oxobutyl phosphate + 5-amino-6-(D-ribitylamino)uracil = 6,7-dimethyl-8-(1-D-ribityl)lumazine + phosphate + 2 H2O + H(+). It participates in cofactor biosynthesis; riboflavin biosynthesis; riboflavin from 2-hydroxy-3-oxobutyl phosphate and 5-amino-6-(D-ribitylamino)uracil: step 1/2. Functionally, catalyzes the formation of 6,7-dimethyl-8-ribityllumazine by condensation of 5-amino-6-(D-ribitylamino)uracil with 3,4-dihydroxy-2-butanone 4-phosphate. This is the penultimate step in the biosynthesis of riboflavin. The protein is 6,7-dimethyl-8-ribityllumazine synthase of Staphylococcus epidermidis (strain ATCC 35984 / DSM 28319 / BCRC 17069 / CCUG 31568 / BM 3577 / RP62A).